Consider the following 178-residue polypeptide: Cytochrome c-type biogenesis protein CcmE (178 aa).

Topologically, residues 1–8 are cytoplasmic; that stretch reads MNPRRKKR. A helical; Signal-anchor for type II membrane protein transmembrane segment spans residues 9–29; it reads LAIVGSILIGIGVVSGLVLYA. The Periplasmic segment spans residues 30–178; the sequence is LSQNIDLFFT…QLESKKTNSY (149 aa). Heme-binding residues include H143 and Y147. Residues 154–178 form a disordered region; sequence EAAGQKHDKATYSDKQLESKKTNSY. Positions 157–178 are enriched in basic and acidic residues; the sequence is GQKHDKATYSDKQLESKKTNSY.

The protein belongs to the CcmE/CycJ family.

Its subcellular location is the cell inner membrane. Its function is as follows. Heme chaperone required for the biogenesis of c-type cytochromes. Transiently binds heme delivered by CcmC and transfers the heme to apo-cytochromes in a process facilitated by CcmF and CcmH. The sequence is that of Cytochrome c-type biogenesis protein CcmE from Colwellia psychrerythraea (strain 34H / ATCC BAA-681) (Vibrio psychroerythus).